Consider the following 141-residue polypeptide: VLSPTDKTNVKAAWSKVGSHAGEYGAEALERMFLGFPTTKTYFPHFDLSHGSAQVQAHGKKVGDALTQAVGHLDDLPGALSALSDLHAYKLRVDPVNFKLLSHCLLVTLALHHPDDFTPAIHASLDKFLSNVSTVLTSKYR.

Residues 1 to 141 (VLSPTDKTNV…VSTVLTSKYR (141 aa)) enclose the Globin domain. S3 is subject to Phosphoserine. Residue K7 is modified to N6-succinyllysine. The residue at position 8 (T8) is a Phosphothreonine. An N6-succinyllysine modification is found at K11. At K16 the chain carries N6-acetyllysine; alternate. N6-succinyllysine; alternate is present on K16. Residue Y24 is modified to Phosphotyrosine. At K40 the chain carries N6-succinyllysine. S49 is modified (phosphoserine). H58 is an O2 binding site. Position 87 (H87) interacts with heme b. Position 102 is a phosphoserine (S102). Phosphothreonine is present on T108. Position 124 is a phosphoserine (S124). Phosphothreonine occurs at positions 134 and 137. S138 is subject to Phosphoserine.

Belongs to the globin family. In terms of assembly, heterotetramer of two alpha chains and two beta chains. Red blood cells.

Its function is as follows. Involved in oxygen transport from the lung to the various peripheral tissues. In Tapirus terrestris (Lowland tapir), this protein is Hemoglobin subunit alpha-1/2.